The following is a 349-amino-acid chain: AA9 family lytic polysaccharide monooxygenase C (349 aa).

Residues 1–19 (MKSTFGLLALAAAAKLVSA) form the signal peptide. Cu(2+) is bound by residues histidine 20 and histidine 102. An intrachain disulfide couples cysteine 62 to cysteine 183. Histidine 169 contributes to the O2 binding site. Residue tyrosine 180 participates in Cu(2+) binding. The tract at residues 233-304 (DGSSSGSSGS…SGSNSGSDSC (72 aa)) is disordered. Low complexity-rich tracts occupy residues 234-262 (GSSS…AAPT) and 269-304 (TSAT…SDSC). The CBM1 domain maps to 311–347 (GSVKIYGQCGGQNYSGPTSCEAGLICKEWNPYYHQCV). Intrachain disulfides connect cysteine 319-cysteine 336 and cysteine 330-cysteine 346. Asparagine 323 is a glycosylation site (N-linked (GlcNAc...) asparagine).

Belongs to the polysaccharide monooxygenase AA9 family. The cofactor is Cu(2+).

It is found in the secreted. The catalysed reaction is [(1-&gt;4)-beta-D-glucosyl]n+m + reduced acceptor + O2 = 4-dehydro-beta-D-glucosyl-[(1-&gt;4)-beta-D-glucosyl]n-1 + [(1-&gt;4)-beta-D-glucosyl]m + acceptor + H2O.. Lytic polysaccharide monooxygenase (LPMO) that depolymerizes crystalline and amorphous polysaccharides via the oxidation of scissile alpha- or beta-(1-4)-glycosidic bonds, yielding C4 oxidation products. Catalysis by LPMOs requires the reduction of the active-site copper from Cu(II) to Cu(I) by a reducing agent and H(2)O(2) or O(2) as a cosubstrate. Active on cellulose and cello-oligosaccharides, as well as plant cell wall-derived hemicellulosic polysaccharides. Also active on cello-oligosaccharides such as cellohexaose, cellopentaose or cellotetraose. This is AA9 family lytic polysaccharide monooxygenase C from Aspergillus fumigatus (strain ATCC MYA-4609 / CBS 101355 / FGSC A1100 / Af293) (Neosartorya fumigata).